The primary structure comprises 790 residues: Cadherin-6 (790 aa).

The signal sequence occupies residues 1–18; the sequence is MRTYRYFLLLFWVGQPYP. A propeptide spanning residues 19–53 is cleaved from the precursor; sequence TFSNPLSKRTSGFPAKRKALELSANSRNELSRSKR. Cadherin domains are found at residues 54-159, 160-268, 269-383, 384-486, and 487-608; these read SWMW…EPIF, TKDV…PPRF, PQST…PPVF, SKLA…DNAP, and EFAE…LIHP. Over 54–615 the chain is Extracellular; that stretch reads SWMWNQFFLL…IHPTGLSTGA (562 aa). N-linked (GlcNAc...) asparagine glycosylation is present at asparagine 255. Residues 260–291 are disordered; the sequence is DVNDNPPRFPQSTYQFKTPESSPPGTPIGRIK. Positions 269-279 are enriched in polar residues; sequence PQSTYQFKTPE. Residues asparagine 399, asparagine 437, asparagine 455, and asparagine 536 are each glycosylated (N-linked (GlcNAc...) asparagine). Residues 616 to 636 traverse the membrane as a helical segment; sequence LVAILLCIVILLVTVVLFAAL. The Cytoplasmic segment spans residues 637 to 790; it reads RRQRKKEPLI…YGGMDSDKDS (154 aa). Phosphoserine is present on residues serine 786 and serine 790.

It localises to the cell membrane. Its function is as follows. Cadherins are calcium-dependent cell adhesion proteins. They preferentially interact with themselves in a homophilic manner in connecting cells; cadherins may thus contribute to the sorting of heterogeneous cell types. This is Cadherin-6 (Cdh6) from Mus musculus (Mouse).